A 444-amino-acid polypeptide reads, in one-letter code: Methylenetetrahydrofolate--tRNA-(uracil-5-)-methyltransferase TrmFO (444 aa).

9-14 lines the FAD pocket; that stretch reads GAGMAG.

It belongs to the MnmG family. TrmFO subfamily. FAD serves as cofactor.

The protein localises to the cytoplasm. It carries out the reaction uridine(54) in tRNA + (6R)-5,10-methylene-5,6,7,8-tetrahydrofolate + NADH + H(+) = 5-methyluridine(54) in tRNA + (6S)-5,6,7,8-tetrahydrofolate + NAD(+). The enzyme catalyses uridine(54) in tRNA + (6R)-5,10-methylene-5,6,7,8-tetrahydrofolate + NADPH + H(+) = 5-methyluridine(54) in tRNA + (6S)-5,6,7,8-tetrahydrofolate + NADP(+). In terms of biological role, catalyzes the folate-dependent formation of 5-methyl-uridine at position 54 (M-5-U54) in all tRNAs. The polypeptide is Methylenetetrahydrofolate--tRNA-(uracil-5-)-methyltransferase TrmFO (Cereibacter sphaeroides (strain ATCC 17025 / ATH 2.4.3) (Rhodobacter sphaeroides)).